Here is a 464-residue protein sequence, read N- to C-terminus: ATP synthase subunit beta (464 aa).

Gly-150–Thr-157 is an ATP binding site.

It belongs to the ATPase alpha/beta chains family. In terms of assembly, F-type ATPases have 2 components, CF(1) - the catalytic core - and CF(0) - the membrane proton channel. CF(1) has five subunits: alpha(3), beta(3), gamma(1), delta(1), epsilon(1). CF(0) has three main subunits: a(1), b(2) and c(9-12). The alpha and beta chains form an alternating ring which encloses part of the gamma chain. CF(1) is attached to CF(0) by a central stalk formed by the gamma and epsilon chains, while a peripheral stalk is formed by the delta and b chains.

Its subcellular location is the cell membrane. The enzyme catalyses ATP + H2O + 4 H(+)(in) = ADP + phosphate + 5 H(+)(out). Produces ATP from ADP in the presence of a proton gradient across the membrane. The catalytic sites are hosted primarily by the beta subunits. The chain is ATP synthase subunit beta from Dehalococcoides mccartyi (strain ATCC BAA-2266 / KCTC 15142 / 195) (Dehalococcoides ethenogenes (strain 195)).